The chain runs to 396 residues: MAKAKFERTKPHVNIGTIGHVDHGKTTLTAAITKVLAERGQAEFRGFDQIDNAPEERERGITIATSHVEYETEKRHYAHVDCPGHADYVKNMITGAAQMDGAILVVSAADGPMPQTREHILLARQVGVPYIVVFLNKADMVDDEELLELVELEIRELLSSYDFPGDDIPIIKGSALKGLNGDKDELGEEAILKLMEAVDNYIPEPERAVDKPFLMPVEDVFSISGRGTVATGRVERGIVKVGEEVEIVGIKATAKTTVTGVEMFRKLLDEGRAGDNIGALLRGVKREDIERGQVLAKPGSITPHTKFKAEAYILTKEEGGRHTPFFNGYRPQFYFRTTDVTGVVDLPAGTEMVMPGDNVAVTINLITPIAMDEGLRFAIREGGRTVGAGVVSSIIE.

Residues 10–206 enclose the tr-type G domain; it reads KPHVNIGTIG…AVDNYIPEPE (197 aa). Residues 19-26 form a G1 region; the sequence is GHVDHGKT. GTP is bound at residue 19-26; that stretch reads GHVDHGKT. Mg(2+) is bound at residue Thr26. A G2 region spans residues 60-64; sequence GITIA. Residues 81–84 form a G3 region; sequence DCPG. GTP is bound by residues 81 to 85 and 136 to 139; these read DCPGH and NKAD. The interval 136-139 is G4; the sequence is NKAD. The G5 stretch occupies residues 174 to 176; sequence SAL.

Belongs to the TRAFAC class translation factor GTPase superfamily. Classic translation factor GTPase family. EF-Tu/EF-1A subfamily. In terms of assembly, monomer.

It localises to the cytoplasm. The catalysed reaction is GTP + H2O = GDP + phosphate + H(+). GTP hydrolase that promotes the GTP-dependent binding of aminoacyl-tRNA to the A-site of ribosomes during protein biosynthesis. The polypeptide is Elongation factor Tu (Geobacter sulfurreducens (strain ATCC 51573 / DSM 12127 / PCA)).